Consider the following 268-residue polypeptide: M1-specific T cell receptor alpha chain (268 aa).

The first 19 residues, 1–19 (MVLKFSVSILWIQLAWVST), serve as a signal peptide directing secretion. Residues 20–107 (QLLEQSPQFL…QPGDTGLYLC (88 aa)) form the Ig-like V-type domain. A t cell receptor alpha variable 27 region spans residues 20-109 (QLLEQSPQFL…GDTGLYLCAG (90 aa)). N-linked (GlcNAc...) asparagine glycosylation is found at Asn36 and Asn42. Cys41 and Cys107 are oxidised to a cystine. The interval 45 to 49 (SVFSS) is CDR1. The segment at 67 to 69 (VVT) is CDR2. Residues 107-118 (CAGGGSQGNLIF) form a CDR3 region. Residues 110 to 128 (GGSQGNLIFGKGTKLSVKP) are t cell receptor alpha joining 42. Residues 129–268 (IQNPDPAVYQ…LLMTLRLWSS (140 aa)) are t cell receptor alpha constant. Positions 147-235 (KSVCLFTDFD…LVEKSFETDT (89 aa)) constitute an Ig-like C1-type domain. Cys150 and Cys200 are oxidised to a cystine. N-linked (GlcNAc...) asparagine glycans are attached at residues Asn160, Asn194, Asn205, and Asn241. The tract at residues 222-243 (CDVKLVEKSFETDTNLNFQNLS) is connecting peptide. A helical transmembrane segment spans residues 244-266 (VIGFRILLLKVAGFNLLMTLRLW). The Cytoplasmic segment spans residues 267–268 (SS).

As to quaternary structure, disulfide-linked heterodimer with TRBV19*01J2S7*01C*02 beta chain. The TR primarily interacts via its CDR3-beta domain with M/matrix protein 1-derived peptide (GILGFVFTL) displayed by HLA-A*02.01 in a 'peg-notch' recognition mode. The alpha-beta TR associates with the transmembrane signaling CD3 coreceptor proteins to form the TR-CD3 (TCR). The assembly of alpha-beta TR heterodimers with CD3 occurs in the endoplasmic reticulum where a single alpha-beta TR heterodimer associates with one CD3D-CD3E heterodimer, one CD3G-CD3E heterodimer and one CD247 homodimer forming a stable octameric structure. CD3D-CD3E and CD3G-CD3E heterodimers preferentially associate with TR alpha and TR beta chains (via TM domain), respectively. The association of the CD247 homodimer is the last step of TCR assembly in the endoplasmic reticulum and is required for transport to the cell surface. As to expression, expressed in M/matrix protein 1-specific effector and memory CD8-positive T cells readily detectable in the peripheral blood, secondary lymphoid organs and lung (primary site of infection) of IAV infected individuals.

Its subcellular location is the cell membrane. Functionally, the alpha chain of TRAV27*01J42*01C*01/TRBV19*01J2S7*01C*02 alpha-beta T cell receptor (TR) clonotype that is specific for HLA-A*02:01-restricted M/matrix protein 1 immunodominant epitope GILGFVFTL of influenza A virus (IAV). Classified as a public TR clonotype, it is preferentially selected in effector memory CD8-positive T cells among multiple HLA-A*02:01 carriers and confers long-lived immunity against IAV infection. Can cross-recognize sporadically emerging IAV variants by molecular mimicry, inducing immunity toward different influenza strains. Antigen recognition initiates TR-CD3 clustering on the cell surface and intracellular activation of LCK that phosphorylates the ITAM motifs of CD3G, CD3D, CD3E and CD247 enabling the recruitment of ZAP70. In turn, ZAP70 phosphorylates LAT, which recruits numerous signaling molecules to form the LAT signalosome. The LAT signalosome propagates signal branching to three major signaling pathways, the calcium, the mitogen-activated protein kinase (MAPK) kinase and the nuclear factor NF-kappa-B (NF-kB) pathways, leading to the mobilization of transcription factors that are critical for gene expression and essential for T cell differentiation into effector/memory T cells. The chain is M1-specific T cell receptor alpha chain from Homo sapiens (Human).